Here is a 406-residue protein sequence, read N- to C-terminus: MRNSFLFTSESVSEGHPDKVADQISDSIVDLFLAKDPEARVACETLTTTQLVVLAGEIRCKGVFEDGEWAPGALDEIEATVRRTVREIGYEQAGFHWNRFRFENNLHGQSPQIAQGVDEGAGKDEGAGDQGIMFGYASDETPDFMPATLDYSHKILERMASDRKAGIAPFLEPDAKSQVTLRYANERPVEATAIVVSTQHAPGYYFHNGEGDEAKYTELRKYVLGVIADVLPAELLTANTVYHINPTGRFEIGGPDGDAGLTGRKIIVDTYGGASPHGGGAFSGKDPTKVDRSAAYITRYLAKNIVAAGLARRCTIQLSYAIGVAEPLSIYVDLHGTGTVDEGRIEAVLPQLVRLTPKGIRTHLGLNKPIYRQTAAYGHFGRQADGDAFPWERTDLVDKLKAALAV.

Position 16 (His16) interacts with ATP. Asp18 is a binding site for Mg(2+). Glu44 is a K(+) binding site. Glu57 and Gln109 together coordinate L-methionine. Residues 109-119 (QSPQIAQGVDE) form a flexible loop region. ATP is bound by residues 174 to 176 (DAK), 249 to 250 (RF), Asp258, 264 to 265 (RK), Ala281, and Lys285. Asp258 provides a ligand contact to L-methionine. Lys289 contacts L-methionine.

Belongs to the AdoMet synthase family. Homotetramer; dimer of dimers. Mg(2+) serves as cofactor. It depends on K(+) as a cofactor.

It is found in the cytoplasm. It carries out the reaction L-methionine + ATP + H2O = S-adenosyl-L-methionine + phosphate + diphosphate. Its pathway is amino-acid biosynthesis; S-adenosyl-L-methionine biosynthesis; S-adenosyl-L-methionine from L-methionine: step 1/1. Functionally, catalyzes the formation of S-adenosylmethionine (AdoMet) from methionine and ATP. The overall synthetic reaction is composed of two sequential steps, AdoMet formation and the subsequent tripolyphosphate hydrolysis which occurs prior to release of AdoMet from the enzyme. This is S-adenosylmethionine synthase from Sphingopyxis alaskensis (strain DSM 13593 / LMG 18877 / RB2256) (Sphingomonas alaskensis).